Here is a 314-residue protein sequence, read N- to C-terminus: DNA-directed RNA polymerase subunit alpha (314 aa).

Residues 1–228 are alpha N-terminal domain (alpha-NTD); the sequence is MIEIEKPKIE…EHLNIFVGLT (228 aa). The alpha C-terminal domain (alpha-CTD) stretch occupies residues 246-314; that stretch reads EKVLEMTIEE…ELGLGLRKDD (69 aa).

The protein belongs to the RNA polymerase alpha chain family. In terms of assembly, homodimer. The RNAP catalytic core consists of 2 alpha, 1 beta, 1 beta' and 1 omega subunit. When a sigma factor is associated with the core the holoenzyme is formed, which can initiate transcription.

It catalyses the reaction RNA(n) + a ribonucleoside 5'-triphosphate = RNA(n+1) + diphosphate. Its function is as follows. DNA-dependent RNA polymerase catalyzes the transcription of DNA into RNA using the four ribonucleoside triphosphates as substrates. The protein is DNA-directed RNA polymerase subunit alpha of Bacillus cytotoxicus (strain DSM 22905 / CIP 110041 / 391-98 / NVH 391-98).